The chain runs to 300 residues: Ornithine carbamoyltransferase (300 aa).

Carbamoyl phosphate contacts are provided by residues 49–52 (STRT), Gln76, Arg100, and 127–130 (HPCQ). L-ornithine contacts are provided by residues Asn158, Asp218, and 222–223 (SM). Carbamoyl phosphate-binding positions include 258–259 (CL) and Arg286.

It belongs to the aspartate/ornithine carbamoyltransferase superfamily. OTCase family.

It is found in the cytoplasm. The enzyme catalyses carbamoyl phosphate + L-ornithine = L-citrulline + phosphate + H(+). Its pathway is amino-acid biosynthesis; L-arginine biosynthesis; L-arginine from L-ornithine and carbamoyl phosphate: step 1/3. In terms of biological role, reversibly catalyzes the transfer of the carbamoyl group from carbamoyl phosphate (CP) to the N(epsilon) atom of ornithine (ORN) to produce L-citrulline. This chain is Ornithine carbamoyltransferase, found in Oleidesulfovibrio alaskensis (strain ATCC BAA-1058 / DSM 17464 / G20) (Desulfovibrio alaskensis).